The primary structure comprises 461 residues: DNA polymerase delta subunit 3 (461 aa).

3 disordered regions span residues 148–229 (VAQA…SAKG), 249–380 (VPGQ…KRVL), and 399–461 (YESE…CQKK). Residues 155 to 172 (ARSSSQTPSDTSAVSTPP) are compositionally biased toward polar residues. Residues 205–214 (DANKEPKAKE) are compositionally biased toward basic and acidic residues. The segment covering 215-228 (APSVSAASSKPSAK) has biased composition (low complexity). The segment covering 279–304 (KPGRKTEPAKIQQKDKKSKMKRMDKS) has biased composition (basic and acidic residues). Positions 371–380 (GKKRKRKRVL) are enriched in basic residues. Basic and acidic residues predominate over residues 427 to 436 (VKKEPKEERK). Residues 451–458 (QISIMGFC) carry the PIP-box motif.

Component of both the DNA polymerase delta and DNA polymerase zeta complexes. The tetrameric DNA polymerase delta complex (Pol-delta4), which consists of POLD1/p125, POLD2/p50, POLD3/p66/p68 and POLD4/p12, with POLD1 bearing DNA polymerase and 3' to 5' proofreading exonuclease activities.

It is found in the cytoplasm. The protein localises to the nucleus. Accessory component of both the DNA polymerase delta complex and the DNA polymerase zeta complex. As a component of the trimeric and tetrameric DNA polymerase delta complexes (Pol-delta3 and Pol-delta4, respectively), plays a role in high fidelity genome replication, including in lagging strand synthesis, and repair. Required for optimal Pol-delta activity. Stabilizes the Pol-delta complex and plays a major role in Pol-delta stimulation by PCNA. Pol-delta3 and Pol-delta4 are characterized by the absence or the presence of POLD4. They exhibit differences in catalytic activity. Most notably, Pol-delta3 shows higher proofreading activity than Pol-delta4. Although both Pol-delta3 and Pol-delta4 process Okazaki fragments in vitro, Pol-delta3 may also be better suited to fulfill this task, exhibiting near-absence of strand displacement activity compared to Pol-delta4 and stalling on encounter with the 5'-blocking oligonucleotides. Pol-delta3 idling process may avoid the formation of a gap, while maintaining a nick that can be readily ligated. Along with DNA polymerase kappa, DNA polymerase delta carries out approximately half of nucleotide excision repair (NER) synthesis following UV irradiation. In this context, POLD3, along with PCNA and RFC1-replication factor C complex, is required to recruit POLD1, the catalytic subunit of the polymerase delta complex, to DNA damage sites. Under conditions of DNA replication stress, required for the repair of broken replication forks through break-induced replication (BIR). Involved in the translesion synthesis (TLS) of templates carrying O6-methylguanine or abasic sites performed by Pol-delta4, independently of DNA polymerase zeta (REV3L) or eta (POLH). Facilitates abasic site bypass by DNA polymerase delta by promoting extension from the nucleotide inserted opposite the lesion. Also involved in TLS, as a component of the tetrameric DNA polymerase zeta complex. Along with POLD2, dramatically increases the efficiency and processivity of DNA synthesis of the DNA polymerase zeta complex compared to the minimal zeta complex, consisting of only REV3L and REV7. This chain is DNA polymerase delta subunit 3 (POLD3), found in Gallus gallus (Chicken).